The primary structure comprises 433 residues: Zinc carboxypeptidase A 1 (433 aa).

The signal sequence occupies residues 1 to 28; that stretch reads MVRLNSAAGSRWWAPAMAILAVALSVEA. In terms of domain architecture, Peptidase M14 spans 130 to 423; that stretch reads DYHTLEEIHA…DSLITLLEES (294 aa). 2 residues coordinate Zn(2+): His-187 and Glu-190. Cys-253 and Cys-276 are disulfide-bonded. Residue His-312 coordinates Zn(2+). Glu-387 serves as the catalytic Proton donor/acceptor.

The protein belongs to the peptidase M14 family. Requires Zn(2+) as cofactor. As to expression, expressed in the posterior midgut in pupae and female adults.

The protein localises to the secreted. Its function is as follows. Involved in the digestion of the blood meal. This Anopheles gambiae (African malaria mosquito) protein is Zinc carboxypeptidase A 1.